The following is a 438-amino-acid chain: Cytochrome P450 monooxygenase claJ (438 aa).

Heme is bound at residue cysteine 378.

This sequence belongs to the cytochrome P450 family. Heme serves as cofactor.

It functions in the pathway secondary metabolite biosynthesis. Functionally, cytochrome P450 monooxygenase; part of the cla gene cluster that produces clavatol and ortho-quinone methide. The clavatol biosynthesis cluster cla and the terrestric acid cluster tra are both involved in the production of peniphenones and penilactones. The non-reducing PKS claF is responsible for the formation of clavatol from successive condensations of 3 malonyl-CoA units, presumably with a simple acetyl-CoA starter unit, and 2 methylation steps. The esterase claE probably collaborates with claF by catalyzing the hydrolysis of ACP-bound acyl intermediates to free the ACP from stalled intermediates. The clavatol oxidase claD then converts clavatol to hydroxyclavatol. Spontaneous dehydration of hydroxyclavatol leads to the accumulation of the highly active ortho-quinone methide. On the other hand, the PKS-NRPS hybrid traA is involved in the formation of crustosic acid, with the help of traB and traD. The polyketide synthase module (PKS) of traA is responsible for the synthesis of the polyketide backbone via the condensation of an acetyl-CoA starter unit with 3 malonyl-CoA units. The downstream nonribosomal peptide synthetase (NRPS) module then amidates the carboxyl end of the polyketide with L-malic acid. Because traA lacks a designated enoylreductase (ER) domain, the required activity is provided the enoyl reductase traG. Crustosic acid undergoes decarboxylation and isomerization to the terrestric acid, catalyzed by the 2-oxoglutarate-dependent dioxygenase traH. Both acids are further converted to the 2 gamma-butyrolactones (R)-5-methyltetronic acid and (S)-5-carboxylmethyltetronic acid, with involvement of the cytochrome P450 monooxygenase claJ. Spontaneous addition of the methide to these gamma-butyrolactones leads to peniphenone D and penilactone D, which undergo again stereospecific attacking by methide to give penilactones A and B. The polypeptide is Cytochrome P450 monooxygenase claJ (Penicillium crustosum (Blue mold fungus)).